A 124-amino-acid chain; its full sequence is Small ribosomal subunit protein uS12 (124 aa).

The residue at position 89 (aspartate 89) is a 3-methylthioaspartic acid.

Belongs to the universal ribosomal protein uS12 family. As to quaternary structure, part of the 30S ribosomal subunit. Contacts proteins S8 and S17. May interact with IF1 in the 30S initiation complex.

Its function is as follows. With S4 and S5 plays an important role in translational accuracy. In terms of biological role, interacts with and stabilizes bases of the 16S rRNA that are involved in tRNA selection in the A site and with the mRNA backbone. Located at the interface of the 30S and 50S subunits, it traverses the body of the 30S subunit contacting proteins on the other side and probably holding the rRNA structure together. The combined cluster of proteins S8, S12 and S17 appears to hold together the shoulder and platform of the 30S subunit. The protein is Small ribosomal subunit protein uS12 of Blochmanniella pennsylvanica (strain BPEN).